The sequence spans 348 residues: N-(sulfonatooxy)prop-2-enimidothioate sulfolyase (348 aa).

7 Kelch repeats span residues 1 to 33 (MARTLQGEWMKVEQKGGQVPAPRSSHGIAVIGD), 34 to 85 (KLYC…VAVG), 87 to 133 (KLYV…FHSM), 139 to 194 (HVYV…VVQG), 209 to 254 (KIPT…FAHA), 259 to 314 (YIII…ASTT), and 322 to 348 (GLLVHGGKLMTNERTDEMYFFAVNSST). Residues Glu-46, Arg-94, Thr-129, Phe-130, and Arg-157 each contribute to the a (Z)-N-(sulfonatooxy)alkanimidothioate site. The Proton donor role is filled by Arg-94. Arg-157 functions as the Proton donor in the catalytic mechanism. The active-site Proton acceptor is the Glu-220. Residue Glu-266 coordinates Fe(2+). Residue Arg-269 participates in a (Z)-N-(sulfonatooxy)alkanimidothioate binding. Fe(2+)-binding residues include Asp-270 and His-274. A (Z)-N-(sulfonatooxy)alkanimidothioate contacts are provided by Trp-309 and Val-310.

In terms of assembly, homodimer. It depends on Fe(2+) as a cofactor. In terms of tissue distribution, expressed constitutively in roots, stems, leaves, flowers, siliques and seedlings.

The enzyme catalyses (Z)-N-(sulfonatooxy)prop-2-enimidothioate = allyl thiocyanate + sulfate. It catalyses the reaction (Z)-N-(sulfonatooxy)prop-2-enimidothioate = 2-(thiiran-2-yl)acetonitrile + sulfate. The catalysed reaction is (Z)-N-(sulfonatooxy)prop-2-enimidothioate = allyl isothiocyanate + sulfate. It carries out the reaction (Z)-phenyl-N-(sulfonatooxy)methanimidothioate = phenylacetonitrile + sulfur + sulfate. The enzyme catalyses glucoerucin + H2O = (Z)-4-methylsulfanylbutyl-N-(sulfonatooxy)methanimidothioate + D-glucose. It catalyses the reaction (Z)-4-methylsulfanylbutyl-N-(sulfonatooxy)methanimidothioate = 5-(methylsulfanyl)pentanenitrile + sulfur + sulfate + H(+). Its activity is regulated as follows. Stimulated by the presence of Fe(2+) leading to an increase formation of both thiocyanate and epithionitrile with allylglucosinolate as substrate in the presence of myrosinase. Repressed by EDTA. Functionally, specifier protein that contributes to constitutive and herbivore-induced simple nitrile formation. Catalyzes allylthiocyanate and corresponding epithionitrile formation from allylglucosinolate in the presence of myrosinase. Also converts aliphatic glucosinolates, such as indol-3-ylmethylglucosinolate, 4-methylsulfinylbutylglucosinolate, 4-methylthiobutyl- and benzylisothiocyanate, to simple nitriles. In Thlaspi arvense (Field penny-cress), this protein is N-(sulfonatooxy)prop-2-enimidothioate sulfolyase.